Reading from the N-terminus, the 264-residue chain is Thymidylate synthase (264 aa).

Arginine 21 contacts dUMP. Histidine 51 is a binding site for (6R)-5,10-methylene-5,6,7,8-tetrahydrofolate. A dUMP-binding site is contributed by 126 to 127 (RR). The active-site Nucleophile is the cysteine 146. Residues 166 to 169 (RSCD), asparagine 177, and 207 to 209 (HLY) contribute to the dUMP site. Aspartate 169 is a (6R)-5,10-methylene-5,6,7,8-tetrahydrofolate binding site. Alanine 263 contributes to the (6R)-5,10-methylene-5,6,7,8-tetrahydrofolate binding site.

This sequence belongs to the thymidylate synthase family. Bacterial-type ThyA subfamily. As to quaternary structure, homodimer.

Its subcellular location is the cytoplasm. It catalyses the reaction dUMP + (6R)-5,10-methylene-5,6,7,8-tetrahydrofolate = 7,8-dihydrofolate + dTMP. Its pathway is pyrimidine metabolism; dTTP biosynthesis. Functionally, catalyzes the reductive methylation of 2'-deoxyuridine-5'-monophosphate (dUMP) to 2'-deoxythymidine-5'-monophosphate (dTMP) while utilizing 5,10-methylenetetrahydrofolate (mTHF) as the methyl donor and reductant in the reaction, yielding dihydrofolate (DHF) as a by-product. This enzymatic reaction provides an intracellular de novo source of dTMP, an essential precursor for DNA biosynthesis. This chain is Thymidylate synthase, found in Shewanella baltica (strain OS185).